A 685-amino-acid polypeptide reads, in one-letter code: Bifunctional lycopene cyclase/phytoene synthase (685 aa).

The segment at 15–255 is lycopene beta-cyclase; that stretch reads TLSYRHFHLL…LVSACFTFDR (241 aa). 7 helical membrane-spanning segments follow: residues 21–41, 48–68, 92–114, 129–149, 156–176, 187–207, and 231–251; these read FHLL…RPFL, KLIL…NLIV, YFFF…RWAL, LATP…KAAV, YFGM…WGSV, GLAP…ASDV, and LPIE…SACF. A phytoene synthase region spans residues 262 to 685; it reads QSVAENAPPL…RAVSAVYFGV (424 aa).

It in the N-terminal section; belongs to the lycopene beta-cyclase family. The protein in the C-terminal section; belongs to the phytoene/squalene synthase family.

Its subcellular location is the membrane. It catalyses the reaction all-trans-lycopene = gamma-carotene. The catalysed reaction is gamma-carotene = all-trans-beta-carotene. The enzyme catalyses 2 (2E,6E,10E)-geranylgeranyl diphosphate = 15-cis-phytoene + 2 diphosphate. Its pathway is carotenoid biosynthesis; beta-carotene biosynthesis. The protein operates within carotenoid biosynthesis; phytoene biosynthesis; all-trans-phytoene from geranylgeranyl diphosphate: step 1/1. Bifunctional enzyme that catalyzes the reactions from geranylgeranyl diphosphate to phytoene (phytoene synthase) and lycopene to beta-carotene via the intermediate gamma-carotene (lycopene cyclase). This Sporisorium reilianum (strain SRZ2) (Maize head smut fungus) protein is Bifunctional lycopene cyclase/phytoene synthase.